We begin with the raw amino-acid sequence, 311 residues long: DNA-directed RNA polymerase subunit alpha (311 aa).

An alpha N-terminal domain (alpha-NTD) region spans residues 1-227 (MAQFQIECIE…NLFCSLRNLD (227 aa)). The segment at 239–311 (DKKISQVLIE…GISLPKEKSD (73 aa)) is alpha C-terminal domain (alpha-CTD).

It belongs to the RNA polymerase alpha chain family. In terms of assembly, in plastids the minimal PEP RNA polymerase catalytic core is composed of four subunits: alpha, beta, beta', and beta''. When a (nuclear-encoded) sigma factor is associated with the core the holoenzyme is formed, which can initiate transcription.

The protein resides in the plastid. The protein localises to the chloroplast. It catalyses the reaction RNA(n) + a ribonucleoside 5'-triphosphate = RNA(n+1) + diphosphate. Its function is as follows. DNA-dependent RNA polymerase catalyzes the transcription of DNA into RNA using the four ribonucleoside triphosphates as substrates. This is DNA-directed RNA polymerase subunit alpha from Pyropia yezoensis (Susabi-nori).